The primary structure comprises 530 residues: Metal transporter Nramp2 (530 aa).

The disordered stretch occupies residues 1–35 (MENDVKENLEEEEDRLLPPPPPSQSLPSTDSESEA). The next 12 helical transmembrane spans lie at 68–88 (LWLF…PGNL), 96–116 (AIAG…GLLI), 153–173 (LALI…IQIL), 177–197 (FLPL…FLFL), 205–225 (LEAV…WMFG), 251–271 (AVGV…SALV), 297–317 (VALF…AKGF), 339–359 (FGGG…AAGQ), 395–415 (IVPT…LDVL), 418–438 (WLNV…LTLV), 456–476 (IAWT…LDFF), and 484–504 (LFGV…VYLI).

The protein belongs to the NRAMP (TC 2.A.55) family.

It is found in the membrane. In terms of biological role, seems to be involved in iron uptake. The sequence is that of Metal transporter Nramp2 (NRAMP2) from Arabidopsis thaliana (Mouse-ear cress).